The sequence spans 146 residues: Large-conductance mechanosensitive channel (146 aa).

3 helical membrane-spanning segments follow: residues 21–41 (VGIIIGAAFTGIVSSLVADLI), 44–64 (IIGLITGGIDFSNLFVNLGDG), and 83–103 (GSFITAVINFLIIAWVVFLLV).

This sequence belongs to the MscL family. As to quaternary structure, homopentamer.

It is found in the cell inner membrane. In terms of biological role, channel that opens in response to stretch forces in the membrane lipid bilayer. May participate in the regulation of osmotic pressure changes within the cell. In Cereibacter sphaeroides (strain ATCC 17029 / ATH 2.4.9) (Rhodobacter sphaeroides), this protein is Large-conductance mechanosensitive channel.